Reading from the N-terminus, the 377-residue chain is Nitric oxide reductase FlRd-NAD(+) reductase (377 aa).

The protein belongs to the FAD-dependent oxidoreductase family. FAD is required as a cofactor.

The protein resides in the cytoplasm. It carries out the reaction 2 reduced [nitric oxide reductase rubredoxin domain] + NAD(+) + H(+) = 2 oxidized [nitric oxide reductase rubredoxin domain] + NADH. It participates in nitrogen metabolism; nitric oxide reduction. One of at least two accessory proteins for anaerobic nitric oxide (NO) reductase. Reduces the rubredoxin moiety of NO reductase. This is Nitric oxide reductase FlRd-NAD(+) reductase from Escherichia coli O17:K52:H18 (strain UMN026 / ExPEC).